A 480-amino-acid chain; its full sequence is V-type ATP synthase beta chain 2 (480 aa).

The protein belongs to the ATPase alpha/beta chains family.

Functionally, produces ATP from ADP in the presence of a proton gradient across the membrane. The V-type beta chain is a regulatory subunit. The sequence is that of V-type ATP synthase beta chain 2 (atpB2) from Treponema pallidum (strain Nichols).